A 715-amino-acid chain; its full sequence is Polyribonucleotide nucleotidyltransferase (715 aa).

2 residues coordinate Mg(2+): Asp493 and Asp499. A KH domain is found at 560 to 619 (PRMITIKINPEKIRDVIGKGGSVIRALTEETGTTIDISDDGVVTIASTNSDGMAEAKKRI). The S1 motif domain occupies 629–697 (GQVYEGTVLK…EKGRVRLSAK (69 aa)).

This sequence belongs to the polyribonucleotide nucleotidyltransferase family. Requires Mg(2+) as cofactor.

The protein localises to the cytoplasm. It carries out the reaction RNA(n+1) + phosphate = RNA(n) + a ribonucleoside 5'-diphosphate. In terms of biological role, involved in mRNA degradation. Catalyzes the phosphorolysis of single-stranded polyribonucleotides processively in the 3'- to 5'-direction. The protein is Polyribonucleotide nucleotidyltransferase of Burkholderia lata (strain ATCC 17760 / DSM 23089 / LMG 22485 / NCIMB 9086 / R18194 / 383).